The chain runs to 322 residues: Undecaprenyl-phosphate 4-deoxy-4-formamido-L-arabinose transferase (322 aa).

At 1 to 235 the chain is on the cytoplasmic side; it reads MFEIHPVKKV…TCLTTTPLRM (235 aa). A helical membrane pass occupies residues 236 to 256; that stretch reads LSLLGSIIAIGGFSIAVLLVI. The Periplasmic segment spans residues 257-269; sequence LRLTFGPQWAAEG. The helical transmembrane segment at 270-290 threads the bilayer; that stretch reads VFMLFAVLFTFIGAQFIGMGL. Topologically, residues 291-322 are cytoplasmic; that stretch reads LGEYIGRIYTDVRARPRYFVQQVIRPSSKENE.

This sequence belongs to the glycosyltransferase 2 family.

The protein localises to the cell inner membrane. The catalysed reaction is UDP-4-deoxy-4-formamido-beta-L-arabinose + di-trans,octa-cis-undecaprenyl phosphate = 4-deoxy-4-formamido-alpha-L-arabinopyranosyl di-trans,octa-cis-undecaprenyl phosphate + UDP. The protein operates within glycolipid biosynthesis; 4-amino-4-deoxy-alpha-L-arabinose undecaprenyl phosphate biosynthesis; 4-amino-4-deoxy-alpha-L-arabinose undecaprenyl phosphate from UDP-4-deoxy-4-formamido-beta-L-arabinose and undecaprenyl phosphate: step 1/2. It participates in bacterial outer membrane biogenesis; lipopolysaccharide biosynthesis. Functionally, catalyzes the transfer of 4-deoxy-4-formamido-L-arabinose from UDP to undecaprenyl phosphate. The modified arabinose is attached to lipid A and is required for resistance to polymyxin and cationic antimicrobial peptides. The polypeptide is Undecaprenyl-phosphate 4-deoxy-4-formamido-L-arabinose transferase (Escherichia coli O139:H28 (strain E24377A / ETEC)).